The following is a 163-amino-acid chain: Aspartate carbamoyltransferase regulatory chain (163 aa).

Positions 113, 118, 143, and 146 each coordinate Zn(2+).

Belongs to the PyrI family. Contains catalytic and regulatory chains. Zn(2+) serves as cofactor.

In terms of biological role, involved in allosteric regulation of aspartate carbamoyltransferase. The chain is Aspartate carbamoyltransferase regulatory chain from Caldivirga maquilingensis (strain ATCC 700844 / DSM 13496 / JCM 10307 / IC-167).